Reading from the N-terminus, the 124-residue chain is Small ribosomal subunit protein uS12 (124 aa).

Asp89 carries the 3-methylthioaspartic acid modification. Residues 104 to 124 are disordered; sequence TDGVENRKQSRSKYGTKRPKK. Basic residues predominate over residues 112 to 124; the sequence is QSRSKYGTKRPKK.

Belongs to the universal ribosomal protein uS12 family. As to quaternary structure, part of the 30S ribosomal subunit. Contacts proteins S8 and S17. May interact with IF1 in the 30S initiation complex.

With S4 and S5 plays an important role in translational accuracy. Functionally, interacts with and stabilizes bases of the 16S rRNA that are involved in tRNA selection in the A site and with the mRNA backbone. Located at the interface of the 30S and 50S subunits, it traverses the body of the 30S subunit contacting proteins on the other side and probably holding the rRNA structure together. The combined cluster of proteins S8, S12 and S17 appears to hold together the shoulder and platform of the 30S subunit. The sequence is that of Small ribosomal subunit protein uS12 from Thermosipho melanesiensis (strain DSM 12029 / CIP 104789 / BI429).